Here is a 201-residue protein sequence, read N- to C-terminus: Musculin (201 aa).

Disordered stretches follow at residues 1 to 108 and 182 to 201; these read MSTG…NAAN and RPDSDSKDVSAANRLCGTSA. Residues 46-56 are compositionally biased toward acidic residues; the sequence is SAEEEDGEEEP. A Nuclear localization signal motif is present at residues 66–71; that stretch reads KRKRLR. A compositionally biased stretch (gly residues) spans 74 to 86; that stretch reads DAGGAGGRAGGAG. The bHLH domain maps to 102–154; the sequence is SQRNAANARERARMRVLSKAFSRLKTSLPWVPPDTKLSKLDTLRLASSYIAHL.

In terms of assembly, efficient DNA binding requires dimerization with another bHLH protein. Binds DNA as a homodimer or a heterodimer. Forms a heterodimer with TCF3.

The protein resides in the nucleus. In terms of biological role, transcription repressor that blocks myogenesis and activation of E-box dependent muscle genes. The protein is Musculin (Msc) of Mus musculus (Mouse).